The chain runs to 327 residues: MEFKLEAHRIVSISLGKIYNSRVQRGGIKLHKNLLVSLVLRSARQVYLSDPCPGLYLAGPAGTPAPPPQQQPGEPAAGPPAGWGEPPPPAARASWPETEPQPERSSVSDAPRVGDEVPVATVTGVGDVFQGGEADATEAAWSRVEGPRQAAAREAEGTAGGWGVFPEVSRAARRPCGCPLGGEDPPGTPAATPRAACCCAPQPAEDEPPAPPAVCPRKRCAAGVGGGPAGCPAPGSTPLKKPRRNLEQPPSGGEDDDAEEMETGNVANLISIFGSSFSGLLRKSPGGGREEEEGEESGPEAAEPGQICCDKPVLRDMNPWSTAIVAF.

Disordered regions lie at residues 59–166 and 227–313; these read GPAG…GVFP and GPAG…DKPV. Positions 71–84 are enriched in low complexity; it reads QPGEPAAGPPAGWG. The segment covering 253 to 262 has biased composition (acidic residues); the sequence is GEDDDAEEME. Over residues 265 to 278 the composition is skewed to polar residues; it reads NVANLISIFGSSFS.

This sequence belongs to the IER family. In terms of assembly, monomer. Homodimer. Associates with the catalytic subunit of protein phosphatase PP2A. Interacts (via N- and C-terminal regions) with PPP2R2B. Interacts with PPP2R2A, PPP2R2C and PPP2R2D. Interacts (via N-terminus) with RPS6KB1. Interacts (via central region) with HSF1; this interaction promotes PPP2CA-induced HSF1 dephosphorylation, leading to enhanced HSF1 transcriptional activity. Expressed in acute myeloid leukemia (AML) cells.

Its subcellular location is the nucleus. The protein localises to the cytoplasm. Plays a role as a transcription factor. Mediates positive transcriptional regulation of several chaperone genes during the heat shock response in a HSF1-dependent manner. Mediates negative transcriptional regulation of CDC25B expression. Plays a role in the dephosphorylation of the heat shock factor HSF1 and ribosomal protein S6 kinase (S6K) by the protein phosphatase PP2A. Involved in the regulation of cell proliferation and resistance to thermal stress. Involved in the cell cycle checkpoint and survival in response to ionizing radiation. Associates with chromatin to the CDC25B promoter. The polypeptide is Immediate early response gene 5 protein (IER5) (Homo sapiens (Human)).